A 501-amino-acid polypeptide reads, in one-letter code: Probable cytosol aminopeptidase (501 aa).

Positions 268 and 273 each coordinate Mn(2+). K280 is an active-site residue. Mn(2+)-binding residues include D291, D350, and E352. Residue R354 is part of the active site.

This sequence belongs to the peptidase M17 family. Requires Mn(2+) as cofactor.

It is found in the cytoplasm. It carries out the reaction Release of an N-terminal amino acid, Xaa-|-Yaa-, in which Xaa is preferably Leu, but may be other amino acids including Pro although not Arg or Lys, and Yaa may be Pro. Amino acid amides and methyl esters are also readily hydrolyzed, but rates on arylamides are exceedingly low.. The enzyme catalyses Release of an N-terminal amino acid, preferentially leucine, but not glutamic or aspartic acids.. Presumably involved in the processing and regular turnover of intracellular proteins. Catalyzes the removal of unsubstituted N-terminal amino acids from various peptides. The sequence is that of Probable cytosol aminopeptidase from Colwellia psychrerythraea (strain 34H / ATCC BAA-681) (Vibrio psychroerythus).